We begin with the raw amino-acid sequence, 68 residues long: DNA-directed RNA polymerase subunit omega (68 aa).

The protein belongs to the RNA polymerase subunit omega family. As to quaternary structure, the RNAP catalytic core consists of 2 alpha, 1 beta, 1 beta' and 1 omega subunit. When a sigma factor is associated with the core the holoenzyme is formed, which can initiate transcription.

The enzyme catalyses RNA(n) + a ribonucleoside 5'-triphosphate = RNA(n+1) + diphosphate. Promotes RNA polymerase assembly. Latches the N- and C-terminal regions of the beta' subunit thereby facilitating its interaction with the beta and alpha subunits. The protein is DNA-directed RNA polymerase subunit omega of Chromobacterium violaceum (strain ATCC 12472 / DSM 30191 / JCM 1249 / CCUG 213 / NBRC 12614 / NCIMB 9131 / NCTC 9757 / MK).